Here is a 212-residue protein sequence, read N- to C-terminus: NAD(P)H-hydrate epimerase (212 aa).

The region spanning 10–212 is the YjeF N-terminal domain; that stretch reads MRSLERAAIA…IGVIVKPIGL (203 aa). A (6S)-NADPHX-binding site is contributed by 65 to 69; it reads NNGGD. 2 residues coordinate K(+): N66 and D129. Residues 133–139 and D161 each bind (6S)-NADPHX; that span reads GLGLTRP. S164 lines the K(+) pocket.

Belongs to the NnrE/AIBP family. Requires K(+) as cofactor.

It carries out the reaction (6R)-NADHX = (6S)-NADHX. The catalysed reaction is (6R)-NADPHX = (6S)-NADPHX. In terms of biological role, catalyzes the epimerization of the S- and R-forms of NAD(P)HX, a damaged form of NAD(P)H that is a result of enzymatic or heat-dependent hydration. This is a prerequisite for the S-specific NAD(P)H-hydrate dehydratase to allow the repair of both epimers of NAD(P)HX. The polypeptide is NAD(P)H-hydrate epimerase (Rhodobacter capsulatus (strain ATCC BAA-309 / NBRC 16581 / SB1003)).